The chain runs to 207 residues: MDIKKQDTRRFKEIKPKIMYYGTSTFLLTTLNEDGTTNISPMSSSWALGHYIILGVGLGGKAIDNLERHKECVINLPGPDLWENVERISSYSGKKSIPPLKKQIGFTYKKEKYEAAGLTPLQSKTVSPTRIKECPIQIEAEVKHIRLPEYESSFAIVETQALHFHAEESIILDENHINPSKWSPLIYNFRHYFGLGREVGKTFRSET.

This sequence belongs to the flavoredoxin family. It depends on FMN as a cofactor.

This is an uncharacterized protein from Bacillus subtilis (strain 168).